The primary structure comprises 828 residues: Translation initiation factor IF-2 (828 aa).

Disordered regions lie at residues 48-76 (SYSG…SEEF) and 112-137 (ASQE…EPKI). A compositionally biased stretch (polar residues) spans 49 to 58 (YSGSTTTLSL). The segment covering 65 to 74 (LETGSSSGSE) has biased composition (low complexity). Over residues 116–126 (DPIEVEQEESS) the composition is skewed to acidic residues. Residues 127 to 137 (DTNKVKEEPKI) are compositionally biased toward basic and acidic residues. In terms of domain architecture, tr-type G spans 326–496 (SRAPVVTVMG…LLIAEMQNLK (171 aa)). Residues 335 to 342 (GHVDHGKT) are G1. 335–342 (GHVDHGKT) lines the GTP pocket. The interval 360–364 (GITQH) is G2. The segment at 382–385 (DTPG) is G3. Residues 382–386 (DTPGH) and 436–439 (NKID) contribute to the GTP site. The G4 stretch occupies residues 436-439 (NKID). A G5 region spans residues 472 to 474 (SAL).

This sequence belongs to the TRAFAC class translation factor GTPase superfamily. Classic translation factor GTPase family. IF-2 subfamily.

Its subcellular location is the cytoplasm. Functionally, one of the essential components for the initiation of protein synthesis. Protects formylmethionyl-tRNA from spontaneous hydrolysis and promotes its binding to the 30S ribosomal subunits. Also involved in the hydrolysis of GTP during the formation of the 70S ribosomal complex. The protein is Translation initiation factor IF-2 of Rickettsia bellii (strain RML369-C).